A 309-amino-acid polypeptide reads, in one-letter code: UDP-N-acetylenolpyruvoylglucosamine reductase (309 aa).

The region spanning 33-195 (VGGQAETLFR…VRARLRTRPG (163 aa)) is the FAD-binding PCMH-type domain. Arginine 175 is a catalytic residue. The Proton donor role is filled by serine 224. The active site involves glutamate 294.

The protein belongs to the MurB family. FAD serves as cofactor.

Its subcellular location is the cytoplasm. It carries out the reaction UDP-N-acetyl-alpha-D-muramate + NADP(+) = UDP-N-acetyl-3-O-(1-carboxyvinyl)-alpha-D-glucosamine + NADPH + H(+). It functions in the pathway cell wall biogenesis; peptidoglycan biosynthesis. Its function is as follows. Cell wall formation. This is UDP-N-acetylenolpyruvoylglucosamine reductase from Granulibacter bethesdensis (strain ATCC BAA-1260 / CGDNIH1).